The chain runs to 550 residues: Cyclopentanone 1,2-monooxygenase (550 aa).

Residues phenylalanine 31 to threonine 32, aspartate 51, tryptophan 60, aspartate 71, tyrosine 77, and valine 123 contribute to the FAD site.

Belongs to the FAD-binding monooxygenase family. In terms of assembly, homotetramer. It depends on FAD as a cofactor.

It carries out the reaction cyclopentanone + NADPH + O2 + H(+) = 5-valerolactone + NADP(+) + H2O. It functions in the pathway alcohol metabolism; cyclopentanol degradation; 5-valerolactone from cyclopentanol: step 2/2. In terms of biological role, catalyzes a Baeyer-Villiger oxidation reaction, i.e. the insertion of an oxygen atom into a carbon-carbon bond adjacent to a carbonyl, which converts ketones to esters or lactones using NADPH as an electron donor. Converts cyclopentanone to 5-valerolactone, a step in the degradation pathway of cyclopentanol. Besides cycloalkanones, can also act on methylated and other alkylated cycloalkanones, and on methylated cycloalkenones, with high enantioselectivity in some cases. Cannot use NADH instead of NADPH. In Comamonas sp. (strain NCIMB 9872), this protein is Cyclopentanone 1,2-monooxygenase (cpnB).